A 474-amino-acid polypeptide reads, in one-letter code: ERO1-like protein alpha (474 aa).

A signal peptide spans 1 to 29 (MVSGCCRLDMSSYVSVLVLCSLLLWGSNS). Cystine bridges form between cysteine 40–cysteine 53, cysteine 42–cysteine 51, cysteine 90–cysteine 398, cysteine 99–cysteine 104, cysteine 99–cysteine 138, cysteine 104–cysteine 109, cysteine 215–cysteine 248, and cysteine 401–cysteine 404. Positions 194, 196, and 207 each coordinate FAD. FAD-binding residues include serine 259, histidine 262, arginine 294, and arginine 307. Asparagine 340 and asparagine 391 each carry an N-linked (GlcNAc...) asparagine glycan. Asparagine 430 carries N-linked (GlcNAc...) asparagine glycosylation.

This sequence belongs to the EROs family. Predominantly monomer. May function both as a monomer and a homodimer. FAD serves as cofactor. Post-translationally, the Cys-99/Cys-104 and Cys-401/Cys-404 disulfide bonds constitute the redox-active center. The Cys-99/Cys-104 disulfide bond may accept electron from protein disulfide isomerase (PDI) and funnel them to the active site disulfide Cys-401/Cys-404.

The protein localises to the endoplasmic reticulum membrane. With respect to regulation, enzyme activity is tightly regulated to prevent the accumulation of reactive oxygen species in the endoplasmic reticulum. Reversibly down-regulated by the formation of disulfide bonds between the active site Cys-99 and Cys-138, and between Cys-104 and Cys-109. Glutathione may be required to regulate its activity in the endoplasmic reticulum. In terms of biological role, oxidoreductase involved in disulfide bond formation in the endoplasmic reticulum. Efficiently reoxidizes P4HB/PDI, the enzyme catalyzing protein disulfide formation, in order to allow P4HB to sustain additional rounds of disulfide formation. Following P4HB reoxidation, passes its electrons to molecular oxygen via FAD, leading to the production of reactive oxygen species (ROS) in the cell. Required for the folding of immunoglobulins. In Xenopus tropicalis (Western clawed frog), this protein is ERO1-like protein alpha.